A 305-amino-acid polypeptide reads, in one-letter code: Probable DNA-invertase y4cG (305 aa).

Positions 15-148 (RLIGYARVST…SGMQAAKARG (134 aa)) constitute a Resolvase/invertase-type recombinase catalytic domain. S23 functions as the O-(5'-phospho-DNA)-serine intermediate in the catalytic mechanism.

The protein belongs to the site-specific recombinase resolvase family.

The polypeptide is Probable DNA-invertase y4cG (Sinorhizobium fredii (strain NBRC 101917 / NGR234)).